Consider the following 346-residue polypeptide: GTP 3',8-cyclase (346 aa).

Residues Gln10–Leu240 form the Radical SAM core domain. Arg19 lines the GTP pocket. Residues Cys26 and Cys30 each coordinate [4Fe-4S] cluster. Tyr32 serves as a coordination point for S-adenosyl-L-methionine. Residue Cys33 coordinates [4Fe-4S] cluster. Arg65 is a GTP binding site. Gly69 serves as a coordination point for S-adenosyl-L-methionine. Position 104 (Thr104) interacts with GTP. Ser129 provides a ligand contact to S-adenosyl-L-methionine. Residue Lys177 participates in GTP binding. An S-adenosyl-L-methionine-binding site is contributed by Met211. 2 residues coordinate [4Fe-4S] cluster: Cys274 and Cys277. Arg279–Arg281 lines the GTP pocket. Position 291 (Cys291) interacts with [4Fe-4S] cluster. The tract at residues Ser326 to Gly346 is disordered.

Belongs to the radical SAM superfamily. MoaA family. As to quaternary structure, monomer and homodimer. [4Fe-4S] cluster is required as a cofactor.

It catalyses the reaction GTP + AH2 + S-adenosyl-L-methionine = (8S)-3',8-cyclo-7,8-dihydroguanosine 5'-triphosphate + 5'-deoxyadenosine + L-methionine + A + H(+). Its pathway is cofactor biosynthesis; molybdopterin biosynthesis. Catalyzes the cyclization of GTP to (8S)-3',8-cyclo-7,8-dihydroguanosine 5'-triphosphate. The chain is GTP 3',8-cyclase from Parasynechococcus marenigrum (strain WH8102).